A 131-amino-acid polypeptide reads, in one-letter code: Sec-independent protein translocase protein TatB (131 aa).

The chain crosses the membrane as a helical span at residues 2-22 (FDGIGFMELLLIGILGLVVLG). 2 stretches are compositionally biased toward polar residues: residues 68–83 (ESQG…QDSI) and 116–131 (AEKS…KPNG). The interval 68 to 131 (ESQGLKNLSP…TGANSDKPNG (64 aa)) is disordered.

Belongs to the TatB family. The Tat system comprises two distinct complexes: a TatABC complex, containing multiple copies of TatA, TatB and TatC subunits, and a separate TatA complex, containing only TatA subunits. Substrates initially bind to the TatABC complex, which probably triggers association of the separate TatA complex to form the active translocon.

The protein localises to the cell inner membrane. Functionally, part of the twin-arginine translocation (Tat) system that transports large folded proteins containing a characteristic twin-arginine motif in their signal peptide across membranes. Together with TatC, TatB is part of a receptor directly interacting with Tat signal peptides. TatB may form an oligomeric binding site that transiently accommodates folded Tat precursor proteins before their translocation. This is Sec-independent protein translocase protein TatB from Shewanella pealeana (strain ATCC 700345 / ANG-SQ1).